The following is a 576-amino-acid chain: 2-succinyl-5-enolpyruvyl-6-hydroxy-3-cyclohexene-1-carboxylate synthase (576 aa).

Belongs to the TPP enzyme family. MenD subfamily. Homodimer. Requires Mg(2+) as cofactor. The cofactor is Mn(2+). Thiamine diphosphate serves as cofactor.

The catalysed reaction is isochorismate + 2-oxoglutarate + H(+) = 5-enolpyruvoyl-6-hydroxy-2-succinyl-cyclohex-3-ene-1-carboxylate + CO2. The protein operates within quinol/quinone metabolism; 1,4-dihydroxy-2-naphthoate biosynthesis; 1,4-dihydroxy-2-naphthoate from chorismate: step 2/7. It functions in the pathway quinol/quinone metabolism; menaquinone biosynthesis. Its function is as follows. Catalyzes the thiamine diphosphate-dependent decarboxylation of 2-oxoglutarate and the subsequent addition of the resulting succinic semialdehyde-thiamine pyrophosphate anion to isochorismate to yield 2-succinyl-5-enolpyruvyl-6-hydroxy-3-cyclohexene-1-carboxylate (SEPHCHC). The chain is 2-succinyl-5-enolpyruvyl-6-hydroxy-3-cyclohexene-1-carboxylate synthase from Photobacterium profundum (strain SS9).